Consider the following 37-residue polypeptide: Large ribosomal subunit protein bL36c (37 aa).

The protein belongs to the bacterial ribosomal protein bL36 family.

The protein resides in the plastid. The protein localises to the chloroplast. This is Large ribosomal subunit protein bL36c from Nicotiana tomentosiformis (Tobacco).